We begin with the raw amino-acid sequence, 390 residues long: Chorismate synthase 1 (390 aa).

Residues Arg39 and Arg45 each contribute to the NADP(+) site. The interval 95–117 (EQEEKEMKRKVTKPRPGHADLNG) is disordered. FMN contacts are provided by residues 132-134 (RSS), 253-254 (NA), Gly298, 313-317 (KPIPT), and Arg339.

Belongs to the chorismate synthase family. In terms of assembly, homotetramer. FMNH2 serves as cofactor.

The enzyme catalyses 5-O-(1-carboxyvinyl)-3-phosphoshikimate = chorismate + phosphate. The protein operates within metabolic intermediate biosynthesis; chorismate biosynthesis; chorismate from D-erythrose 4-phosphate and phosphoenolpyruvate: step 7/7. Its function is as follows. Catalyzes the anti-1,4-elimination of the C-3 phosphate and the C-6 proR hydrogen from 5-enolpyruvylshikimate-3-phosphate (EPSP) to yield chorismate, which is the branch point compound that serves as the starting substrate for the three terminal pathways of aromatic amino acid biosynthesis. This reaction introduces a second double bond into the aromatic ring system. The chain is Chorismate synthase 1 from Bacillus cereus (strain ATCC 14579 / DSM 31 / CCUG 7414 / JCM 2152 / NBRC 15305 / NCIMB 9373 / NCTC 2599 / NRRL B-3711).